The chain runs to 376 residues: Mitochondrial distribution and morphology protein 34 (376 aa).

Positions 1–194 (MSFTFNWPRF…LPGIIHRLSQ (194 aa)) constitute an SMP-LTD domain. 2 disordered regions span residues 207–249 (SKHP…PKIV) and 286–376 (SVPP…LHPS). The span at 218 to 230 (EISEPGDYGEEGE) shows a compositional bias: acidic residues. The segment covering 306 to 318 (VKAKRKRTYRLGG) has biased composition (basic residues). The span at 350–362 (MDRYFRSYDDHSR) shows a compositional bias: basic and acidic residues.

The protein belongs to the MDM34 family. In terms of assembly, component of the ER-mitochondria encounter structure (ERMES) or MDM complex, composed of MMM1, MDM10, MDM12 and MDM34.

It localises to the mitochondrion outer membrane. Its function is as follows. Component of the ERMES/MDM complex, which serves as a molecular tether to connect the endoplasmic reticulum (ER) and mitochondria. Components of this complex are involved in the control of mitochondrial shape and protein biogenesis, and function in nonvesicular lipid trafficking between the ER and mitochondria. MDM34 is required for the interaction of the ER-resident membrane protein MMM1 and the outer mitochondrial membrane-resident beta-barrel protein MDM10. The sequence is that of Mitochondrial distribution and morphology protein 34 from Laccaria bicolor (strain S238N-H82 / ATCC MYA-4686) (Bicoloured deceiver).